We begin with the raw amino-acid sequence, 507 residues long: Serine/threonine-protein kinase CBK1 (507 aa).

The disordered stretch occupies residues 1–30 (MQKVSGSGKKTTAFQQRKSDSVYNNNEMNK). In terms of domain architecture, Protein kinase spans 126 to 431 (FHTVKVIGKG…ANDIKLHPFF (306 aa)). ATP contacts are provided by residues 132 to 140 (IGKGAFGEV) and Lys155. Asp249 functions as the Proton acceptor in the catalytic mechanism. The AGC-kinase C-terminal domain occupies 432-505 (RGVNWDTIRE…KRFDMMTQKG (74 aa)).

The protein belongs to the protein kinase superfamily. STE Ser/Thr protein kinase family. COT1 subfamily.

The catalysed reaction is L-seryl-[protein] + ATP = O-phospho-L-seryl-[protein] + ADP + H(+). It catalyses the reaction L-threonyl-[protein] + ATP = O-phospho-L-threonyl-[protein] + ADP + H(+). Its function is as follows. Protein kinase that seems to play a role in signaling pathways necessary for cell growth and mating. In Pneumocystis carinii, this protein is Serine/threonine-protein kinase CBK1 (CBK1).